The chain runs to 278 residues: Large ribosomal subunit protein uL2 (278 aa).

Disordered regions lie at residues 1–58 (MAIR…GGGH) and 224–278 (VVMN…GKKR). Residues 23–33 (EITRDHPEKSL) are compositionally biased toward basic and acidic residues. Basic residues predominate over residues 37 to 58 (LHGRGGRNAHGRITTRHKGGGH). Over residues 253–268 (PEGRTRKPKKASDKLI) the composition is skewed to basic and acidic residues. Positions 269 to 278 (VRRRRTGKKR) are enriched in basic residues.

The protein belongs to the universal ribosomal protein uL2 family. In terms of assembly, part of the 50S ribosomal subunit. Forms a bridge to the 30S subunit in the 70S ribosome.

Functionally, one of the primary rRNA binding proteins. Required for association of the 30S and 50S subunits to form the 70S ribosome, for tRNA binding and peptide bond formation. It has been suggested to have peptidyltransferase activity; this is somewhat controversial. Makes several contacts with the 16S rRNA in the 70S ribosome. This Mycolicibacterium vanbaalenii (strain DSM 7251 / JCM 13017 / BCRC 16820 / KCTC 9966 / NRRL B-24157 / PYR-1) (Mycobacterium vanbaalenii) protein is Large ribosomal subunit protein uL2.